We begin with the raw amino-acid sequence, 344 residues long: Methionine import ATP-binding protein MetN (344 aa).

The 240-residue stretch at 2–241 (IEINRVNKVF…PKTELARKFI (240 aa)) folds into the ABC transporter domain. 38 to 45 (GSSGAGKS) is a binding site for ATP.

Belongs to the ABC transporter superfamily. Methionine importer (TC 3.A.1.24) family. In terms of assembly, the complex is composed of two ATP-binding proteins (MetN), two transmembrane proteins (MetI) and a solute-binding protein (MetQ).

It localises to the cell inner membrane. The enzyme catalyses L-methionine(out) + ATP + H2O = L-methionine(in) + ADP + phosphate + H(+). The catalysed reaction is D-methionine(out) + ATP + H2O = D-methionine(in) + ADP + phosphate + H(+). Functionally, part of the ABC transporter complex MetNIQ involved in methionine import. Responsible for energy coupling to the transport system. The polypeptide is Methionine import ATP-binding protein MetN (Photobacterium profundum (strain SS9)).